The chain runs to 259 residues: Proteasome subunit alpha (259 aa).

The interval 222–259 (RITGPALEQLIPAEPAPASEPAPESKPDTETKPADPQD) is disordered. The segment covering 244-259 (PESKPDTETKPADPQD) has biased composition (basic and acidic residues).

Belongs to the peptidase T1A family. The 20S proteasome core is composed of 14 alpha and 14 beta subunits that assemble into four stacked heptameric rings, resulting in a barrel-shaped structure. The two inner rings, each composed of seven catalytic beta subunits, are sandwiched by two outer rings, each composed of seven alpha subunits. The catalytic chamber with the active sites is on the inside of the barrel. Has a gated structure, the ends of the cylinder being occluded by the N-termini of the alpha-subunits. Is capped by the proteasome-associated ATPase, ARC.

It localises to the cytoplasm. It functions in the pathway protein degradation; proteasomal Pup-dependent pathway. The formation of the proteasomal ATPase ARC-20S proteasome complex, likely via the docking of the C-termini of ARC into the intersubunit pockets in the alpha-rings, may trigger opening of the gate for substrate entry. Interconversion between the open-gate and close-gate conformations leads to a dynamic regulation of the 20S proteasome proteolysis activity. Component of the proteasome core, a large protease complex with broad specificity involved in protein degradation. The chain is Proteasome subunit alpha from Rhodococcus jostii (strain RHA1).